A 631-amino-acid chain; its full sequence is Sphingomyelin phosphodiesterase (631 aa).

The disordered stretch occupies residues 1–23 (MPRYGASLRQSCPRSGREQGQDG). The signal sequence occupies residues 1–46 (MPRYGASLRQSCPRSGREQGQDGTAGAPGLLWMGLVLALALALALA). The Saposin B-type domain occupies 87 to 171 (GNLTCPICKG…LLGSTCGHWD (85 aa)). N-linked (GlcNAc...) asparagine glycosylation is present at N88. 3 disulfide bridges follow: C91-C167, C94-C159, and C122-C133. An N-linked (GlcNAc...) asparagine glycan is attached at N177. Zn(2+)-binding residues include D208 and H210. 2 cysteine pairs are disulfide-bonded: C223–C228 and C229–C252. Residues D280 and N320 each contribute to the Zn(2+) site. N337 and N397 each carry an N-linked (GlcNAc...) asparagine glycan. C387 and C433 form a disulfide bridge. Zn(2+)-binding residues include H427, H459, and H461. A glycan (N-linked (GlcNAc...) asparagine) is linked at N505. At S510 the chain carries Phosphoserine; by PKC/PRKCD. N522 is a glycosylation site (N-linked (GlcNAc...) asparagine). Intrachain disulfides connect C586/C590 and C596/C609.

Belongs to the acid sphingomyelinase family. Monomer. Interacts with SORT1; the interaction is required for SMPD1 targeting to lysosomes. The cofactor is Zn(2+). Proteolytically processed. Mature lysosomal form arises from C-terminal proteolytic processing of pro-sphingomyelin phosphodiesterase. Post-translationally, this form is generated following cleavage by CASP7 in the extracellular milieu. It shows increased activity. In terms of processing, both lysosomal and secreted forms are glycosylated but they show a differential pattern of glycosylation. Phosphorylated at Ser-510 by PRKCD upon stress stimuli. Phosphorylation is required for secretion.

It is found in the lysosome. It localises to the lipid droplet. The protein resides in the secreted. Its subcellular location is the extracellular space. The catalysed reaction is a sphingomyelin + H2O = phosphocholine + an N-acylsphing-4-enine + H(+). It carries out the reaction N-(octadecanoyl)-sphing-4-enine-1-phosphocholine + H2O = N-octadecanoylsphing-4-enine + phosphocholine + H(+). It catalyses the reaction 1,2-dihexadecanoyl-sn-glycero-3-phosphocholine + H2O = 1,2-dihexadecanoyl-sn-glycerol + phosphocholine + H(+). The enzyme catalyses a 1,2-diacyl-sn-glycero-3-phosphocholine + H2O = phosphocholine + a 1,2-diacyl-sn-glycerol + H(+). Its activity is regulated as follows. Hydrolysis of liposomal sphingomyelin is stimulated by incorporation of diacylglycerol (DAG), ceramide and free fatty acids into the liposomal membranes. Phosphatidylcholine hydrolysis is inhibited by incorporation of cholesterol, ceramide, DAG, monoacylglycerol and fatty acids. Antidepressants, namely amitriptyline, imipramine, desipramine, fluoxetine, sertraline, escitalopram, and maprotiline inhibit sphingomyelin phosphodiesterase activity. With respect to regulation, (Microbial infection) The secretory form is activated by P.aeruginosa, this activation results in the release of ceramide in the outer leaflet of the plasma membrane. (Microbial infection) The secretory form is activated by human coronavirus SARS-CoV-2, this activation results in the release of ceramide in the outer leaflet of the plasma membrane. Converts sphingomyelin to ceramide. Exists as two enzymatic forms that arise from alternative trafficking of a single protein precursor, one that is targeted to the endolysosomal compartment, whereas the other is released extracellularly. However, in response to various forms of stress, lysosomal exocytosis may represent a major source of the secretory form. Functionally, in the lysosomes, converts sphingomyelin to ceramide. Plays an important role in the export of cholesterol from the intraendolysosomal membranes. Also has phospholipase C activities toward 1,2-diacylglycerolphosphocholine and 1,2-diacylglycerolphosphoglycerol. Modulates stress-induced apoptosis through the production of ceramide. In terms of biological role, when secreted, modulates cell signaling with its ability to reorganize the plasma membrane by converting sphingomyelin to ceramide. Secreted form is increased in response to stress and inflammatory mediators such as IL1B, IFNG or TNF as well as upon infection with bacteria and viruses. Produces the release of ceramide in the outer leaflet of the plasma membrane playing a central role in host defense. Ceramide reorganizes these rafts into larger signaling platforms that are required to internalize P.aeruginosa, induce apoptosis and regulate the cytokine response in infected cells. In wounded cells, the lysosomal form is released extracellularly in the presence of Ca(2+) and promotes endocytosis and plasma membrane repair. Its function is as follows. This form is generated following cleavage by CASP7 in the extracellular milieu in response to bacterial infection. It shows increased ability to convert sphingomyelin to ceramide and promotes plasma membrane repair. Plasma membrane repair by ceramide counteracts the action of gasdermin-D (GSDMD) perforin (PRF1) pores that are formed in response to bacterial infection. (Microbial infection) Secretion is activated by bacteria such as P.aeruginosa, N.gonorrhoeae and others, this activation results in the release of ceramide in the outer leaflet of the plasma membrane which facilitates the infection. Functionally, (Microbial infection) Secretion is activated by human coronaviruses SARS-CoV and SARS-CoV-2 as well as Zaire ebolavirus, this activation results in the release of ceramide in the outer leaflet of the plasma membrane which facilitates the infection. In terms of biological role, lacks residues that bind the cofactor Zn(2+) and has no enzyme activity. The protein is Sphingomyelin phosphodiesterase of Homo sapiens (Human).